The following is a 410-amino-acid chain: Adenosylhomocysteinase (410 aa).

Positions 117 and 142 each coordinate substrate. Threonine 143–threonine 145 contacts NAD(+). 2 residues coordinate substrate: lysine 172 and aspartate 176. NAD(+) is bound by residues asparagine 177, glycine 206 to glycine 211, glutamate 229, alanine 285 to histidine 287, and asparagine 332.

Belongs to the adenosylhomocysteinase family. NAD(+) serves as cofactor.

It is found in the cytoplasm. The catalysed reaction is S-adenosyl-L-homocysteine + H2O = L-homocysteine + adenosine. The protein operates within amino-acid biosynthesis; L-homocysteine biosynthesis; L-homocysteine from S-adenosyl-L-homocysteine: step 1/1. Its function is as follows. May play a key role in the regulation of the intracellular concentration of adenosylhomocysteine. The polypeptide is Adenosylhomocysteinase (Thermoplasma acidophilum (strain ATCC 25905 / DSM 1728 / JCM 9062 / NBRC 15155 / AMRC-C165)).